Consider the following 412-residue polypeptide: Imidazolonepropionase (412 aa).

Residues histidine 71 and histidine 73 each contribute to the Fe(3+) site. Positions 71 and 73 each coordinate Zn(2+). 4-imidazolone-5-propanoate contacts are provided by arginine 80, tyrosine 143, and histidine 176. Tyrosine 143 is an N-formimidoyl-L-glutamate binding site. Position 241 (histidine 241) interacts with Fe(3+). Histidine 241 is a Zn(2+) binding site. Glutamine 244 provides a ligand contact to 4-imidazolone-5-propanoate. Aspartate 316 is a binding site for Fe(3+). Aspartate 316 contacts Zn(2+). N-formimidoyl-L-glutamate-binding residues include asparagine 318 and glycine 320. Threonine 321 contributes to the 4-imidazolone-5-propanoate binding site.

This sequence belongs to the metallo-dependent hydrolases superfamily. HutI family. Zn(2+) serves as cofactor. Requires Fe(3+) as cofactor.

The protein resides in the cytoplasm. It catalyses the reaction 4-imidazolone-5-propanoate + H2O = N-formimidoyl-L-glutamate. The protein operates within amino-acid degradation; L-histidine degradation into L-glutamate; N-formimidoyl-L-glutamate from L-histidine: step 3/3. Its function is as follows. Catalyzes the hydrolytic cleavage of the carbon-nitrogen bond in imidazolone-5-propanoate to yield N-formimidoyl-L-glutamate. It is the third step in the universal histidine degradation pathway. This is Imidazolonepropionase from Aromatoleum aromaticum (strain DSM 19018 / LMG 30748 / EbN1) (Azoarcus sp. (strain EbN1)).